Reading from the N-terminus, the 141-residue chain is Hemoglobin subunit beta-C (141 aa).

In terms of domain architecture, Globin spans 1–141 (PNKALITGFW…VASALAHRYH (141 aa)). Heme b contacts are provided by histidine 58 and histidine 87.

It belongs to the globin family. Heterotetramer of two alpha chains and two beta chains. In terms of tissue distribution, red blood cells.

Its function is as follows. Involved in oxygen transport from the lung to the various peripheral tissues. The polypeptide is Hemoglobin subunit beta-C (Ammotragus lervia (Barbary sheep)).